A 596-amino-acid chain; its full sequence is Bromodomain-containing protein 9 (596 aa).

Over residues 1 to 10 (MGKKHKKHKA) the composition is skewed to basic residues. Disordered stretches follow at residues 1 to 26 (MGKKHKKHKAEWRSSYEDYTDTPLEK) and 38 to 137 (EVTE…AENE). Positions 50–62 (SYYDDRSDHERER) are enriched in basic and acidic residues. Ser56 carries the phosphoserine modification. Residues 63-73 (HREKKKKKKKK) show a composition bias toward basic residues. A compositionally biased stretch (basic and acidic residues) spans 74 to 85 (SEKEKHLDEEER). Basic residues predominate over residues 86–97 (RKRKEEKKRKRE). Positions 111–126 (DPGKKVEVEPPPDRPV) are enriched in basic and acidic residues. The Bromo domain occupies 136–240 (NESTPIQRLL…HAGFKMMSKA (105 aa)). Positions 214 to 216 (TYN) are histone H4K5ac H4K8ac and histone H4K5bu H4K8bu binding. Lys372 carries the post-translational modification N6-acetyllysine; alternate. Lys372 is covalently cross-linked (Glycyl lysine isopeptide (Lys-Gly) (interchain with G-Cter in SUMO2); alternate). The interval 536 to 596 (AQAERGGSRP…SPEPAAPAKN (61 aa)) is disordered. A compositionally biased stretch (low complexity) spans 543-555 (SRPSSNLSSLSTA). 2 positions are modified to phosphoserine: Ser565 and Ser587.

As to quaternary structure, binds acetylated histones H3 and H4. Binds butyrylated histone H4. Component of the multiprotein chromatin-remodeling subcomplex SWI/SNF called GBAF, which includes at least BICRA or BICRAL (mutually exclusive), BRD9, SS18, the core BAF subunits, SMARCA2/BRM, SMARCA4/BRG1/BAF190A, ACTL6A/BAF53, SMARCC1/BAF155, and SMARCD1/BAF60A. Interacts (via N-terminal bromodomain) with acetylated RAD54. Interacts (via C-terminus) with RAD51.

It localises to the nucleus. Plays a role in chromatin remodeling and regulation of transcription. Acts as a chromatin reader that recognizes and binds acylated histones: binds histones that are acetylated and/or butyrylated. Component of SWI/SNF chromatin remodeling subcomplex GBAF that carries out key enzymatic activities, changing chromatin structure by altering DNA-histone contacts within a nucleosome in an ATP-dependent manner. Also orchestrates the RAD51-RAD54 complex formation and thereby plays a role in homologous recombination (HR). The chain is Bromodomain-containing protein 9 (Brd9) from Mus musculus (Mouse).